Reading from the N-terminus, the 54-residue chain is Ribulose bisphosphate carboxylase large chain (54 aa).

The propeptide occupies Met1–Ser2. An N-acetylproline modification is found at Pro3. Residue Lys14 is modified to N6,N6,N6-trimethyllysine.

This sequence belongs to the RuBisCO large chain family. Type I subfamily. Heterohexadecamer of 8 large chains and 8 small chains.

Its subcellular location is the plastid. It is found in the chloroplast. The enzyme catalyses 2 (2R)-3-phosphoglycerate + 2 H(+) = D-ribulose 1,5-bisphosphate + CO2 + H2O. The catalysed reaction is D-ribulose 1,5-bisphosphate + O2 = 2-phosphoglycolate + (2R)-3-phosphoglycerate + 2 H(+). In terms of biological role, ruBisCO catalyzes two reactions: the carboxylation of D-ribulose 1,5-bisphosphate, the primary event in carbon dioxide fixation, as well as the oxidative fragmentation of the pentose substrate in the photorespiration process. Both reactions occur simultaneously and in competition at the same active site. The chain is Ribulose bisphosphate carboxylase large chain (rbcL) from Geum borisii (Avens).